The following is a 228-amino-acid chain: MAVETSHDAELTWSLVLPVKPLARAKTRMAEAAGPLRQALALAVAADTVAAALRCAAVAEVIVVTDDPLAAAELSALGARVVPDEPDCGLNPALAHGAALARAARPRAGVGAMSADLPALRPAELGRALAAAAGFAESFVADAQGVGTTLYAVRPGVPFSPAFGPGSRARHAAQGARELAIEGLDSLRRDVDTPGDLRAALALGTGPRTAALAARMPAFSPGAETSRG.

Thr148, Gly164, and Ser167 together coordinate phosphoenolpyruvate.

Belongs to the CofC family.

The enzyme catalyses phosphoenolpyruvate + GTP + H(+) = enolpyruvoyl-2-diphospho-5'-guanosine + diphosphate. It participates in cofactor biosynthesis; coenzyme F420 biosynthesis. Functionally, guanylyltransferase that catalyzes the activation of phosphoenolpyruvate (PEP) as enolpyruvoyl-2-diphospho-5'-guanosine, via the condensation of PEP with GTP. It is involved in the biosynthesis of coenzyme F420, a hydride carrier cofactor. The chain is Phosphoenolpyruvate guanylyltransferase from Thermomonospora curvata (strain ATCC 19995 / DSM 43183 / JCM 3096 / KCTC 9072 / NBRC 15933 / NCIMB 10081 / Henssen B9).